Here is a 407-residue protein sequence, read N- to C-terminus: Carbamoyl phosphate synthase small chain (407 aa).

Residues 1–205 (MTETTPKTAP…LQDGYGEQDA (205 aa)) form a CPSase region. Residues Ser60, Gly257, and Gly259 each coordinate L-glutamine. The 189-residue stretch at 209–397 (HVVALDFGVK…INLIRERKGQ (189 aa)) folds into the Glutamine amidotransferase type-1 domain. The active-site Nucleophile is Cys286. The L-glutamine site is built by Leu287, Gln290, Asn328, Gly330, and Phe331. Catalysis depends on residues His370 and Glu372.

The protein belongs to the CarA family. As to quaternary structure, composed of two chains; the small (or glutamine) chain promotes the hydrolysis of glutamine to ammonia, which is used by the large (or ammonia) chain to synthesize carbamoyl phosphate. Tetramer of heterodimers (alpha,beta)4.

The catalysed reaction is hydrogencarbonate + L-glutamine + 2 ATP + H2O = carbamoyl phosphate + L-glutamate + 2 ADP + phosphate + 2 H(+). The enzyme catalyses L-glutamine + H2O = L-glutamate + NH4(+). The protein operates within amino-acid biosynthesis; L-arginine biosynthesis; carbamoyl phosphate from bicarbonate: step 1/1. Its pathway is pyrimidine metabolism; UMP biosynthesis via de novo pathway; (S)-dihydroorotate from bicarbonate: step 1/3. Functionally, small subunit of the glutamine-dependent carbamoyl phosphate synthetase (CPSase). CPSase catalyzes the formation of carbamoyl phosphate from the ammonia moiety of glutamine, carbonate, and phosphate donated by ATP, constituting the first step of 2 biosynthetic pathways, one leading to arginine and/or urea and the other to pyrimidine nucleotides. The small subunit (glutamine amidotransferase) binds and cleaves glutamine to supply the large subunit with the substrate ammonia. The chain is Carbamoyl phosphate synthase small chain from Brucella suis (strain ATCC 23445 / NCTC 10510).